The chain runs to 632 residues: Glycerophosphodiester phosphodiesterase domain-containing protein 4 (632 aa).

Topologically, residues 1–64 (MEETQDSSSS…GSCCCSRKEQ (64 aa)) are cytoplasmic. The chain crosses the membrane as a helical span at residues 65–85 (FFYMCLVIAFILSVLFLFVWV). Residues 86–114 (ETSNEYNGFDWVVYLGTGCWFFWSILVLS) are Extracellular-facing. A helical transmembrane segment spans residues 115-135 (AAGIMVAYTTLLLLLGFLLLW). Over 136 to 147 (ERIELNLHTSHK) the chain is Cytoplasmic. The chain crosses the membrane as a helical span at residues 148–168 (VFICLVIVLCSFLLAVLSHFW). Residues 169–180 (KDKWLIAGLSLQ) lie on the Extracellular side of the membrane. Residues 181-201 (IFAPFVHLSLITVMIIISWPL) form a helical membrane-spanning segment. Topologically, residues 202-240 (SICVARLESEVKVRRYRMADYEQEIQERCNVFQRLRALQ) are cytoplasmic. Residues 241 to 261 (IAAGLSFLIILLCLYLMPLGI) form a helical membrane-spanning segment. At 262–542 (YSPCILKKEN…SRPLFFMTPG (281 aa)) the chain is on the extracellular side. In terms of domain architecture, GP-PDE spans 276 to 533 (PTLFGHRGAP…DNIELLNQLS (258 aa)). Positions 308, 310, and 323 each coordinate a divalent metal cation. Asparagine 343, asparagine 349, asparagine 384, and asparagine 473 each carry an N-linked (GlcNAc...) asparagine glycan. The helical transmembrane segment at 543–563 (FYMFMWLFLDIASAVIIGFVF) threads the bilayer. Topologically, residues 564 to 632 (CYNWIKEIKR…QKTEPKTENL (69 aa)) are cytoplasmic. The interval 596–632 (ENNDASQQKPEVAPTSANLAPENMIELQKTEPKTENL) is disordered. Basic and acidic residues predominate over residues 623 to 632 (QKTEPKTENL).

The protein belongs to the glycerophosphoryl diester phosphodiesterase family. Detected in testis, in particular in spermatocytes.

Its subcellular location is the cytoplasm. The protein resides in the membrane. The chain is Glycerophosphodiester phosphodiesterase domain-containing protein 4 (Gdpd4) from Mus musculus (Mouse).